The following is a 348-amino-acid chain: Dihydroorotase (348 aa).

Zn(2+)-binding residues include His-17 and His-19. Residues 19–21 (HLR) and Asn-45 each bind substrate. Residues Lys-103, His-140, and His-178 each coordinate Zn(2+). An N6-carboxylysine modification is found at Lys-103. Residue His-140 coordinates substrate. Residue Leu-223 participates in substrate binding. Residue Asp-251 coordinates Zn(2+). Asp-251 is a catalytic residue. Positions 255 and 267 each coordinate substrate.

It belongs to the metallo-dependent hydrolases superfamily. DHOase family. Class II DHOase subfamily. As to quaternary structure, homodimer. Requires Zn(2+) as cofactor.

It catalyses the reaction (S)-dihydroorotate + H2O = N-carbamoyl-L-aspartate + H(+). It functions in the pathway pyrimidine metabolism; UMP biosynthesis via de novo pathway; (S)-dihydroorotate from bicarbonate: step 3/3. Functionally, catalyzes the reversible cyclization of carbamoyl aspartate to dihydroorotate. In Salmonella arizonae (strain ATCC BAA-731 / CDC346-86 / RSK2980), this protein is Dihydroorotase.